Consider the following 304-residue polypeptide: Small ribosomal subunit biogenesis GTPase RsgA (304 aa).

In terms of domain architecture, CP-type G spans 78-237; it reads VSFLTRPPVA…VADTPGFNRP (160 aa). GTP is bound by residues 127-130 and 179-187; these read TKTD and GPSGVGKSS. Residues C262, C267, H269, and C275 each coordinate Zn(2+).

Belongs to the TRAFAC class YlqF/YawG GTPase family. RsgA subfamily. Monomer. Associates with 30S ribosomal subunit, binds 16S rRNA. The cofactor is Zn(2+).

It is found in the cytoplasm. Its function is as follows. One of several proteins that assist in the late maturation steps of the functional core of the 30S ribosomal subunit. Helps release RbfA from mature subunits. May play a role in the assembly of ribosomal proteins into the subunit. Circularly permuted GTPase that catalyzes slow GTP hydrolysis, GTPase activity is stimulated by the 30S ribosomal subunit. The polypeptide is Small ribosomal subunit biogenesis GTPase RsgA (Synechococcus sp. (strain CC9311)).